The following is a 346-amino-acid chain: Methylthioribose-1-phosphate isomerase (346 aa).

Residues 46–48 (RGA), Arg89, and Gln196 each bind substrate. The active-site Proton donor is the Asp237. 247–248 (NK) is a binding site for substrate.

The protein belongs to the eIF-2B alpha/beta/delta subunits family. MtnA subfamily.

The catalysed reaction is 5-(methylsulfanyl)-alpha-D-ribose 1-phosphate = 5-(methylsulfanyl)-D-ribulose 1-phosphate. It participates in amino-acid biosynthesis; L-methionine biosynthesis via salvage pathway; L-methionine from S-methyl-5-thio-alpha-D-ribose 1-phosphate: step 1/6. Functionally, catalyzes the interconversion of methylthioribose-1-phosphate (MTR-1-P) into methylthioribulose-1-phosphate (MTRu-1-P). The polypeptide is Methylthioribose-1-phosphate isomerase (Citrifermentans bemidjiense (strain ATCC BAA-1014 / DSM 16622 / JCM 12645 / Bem) (Geobacter bemidjiensis)).